Here is a 354-residue protein sequence, read N- to C-terminus: Probable tartrate dehydrogenase/decarboxylase (354 aa).

Residues aspartate 221, aspartate 245, and aspartate 249 each coordinate Mn(2+).

Belongs to the isocitrate and isopropylmalate dehydrogenases family. It depends on Mg(2+) as a cofactor. Requires Mn(2+) as cofactor. K(+) is required as a cofactor.

It carries out the reaction tartrate + NAD(+) = 2-hydroxy-3-oxosuccinate + NADH + H(+). The catalysed reaction is (2R,3S)-tartrate + NAD(+) = 2-hydroxy-3-oxosuccinate + NADH + H(+). It catalyses the reaction (2R,3R)-tartrate + NAD(+) = 2-hydroxy-3-oxosuccinate + NADH + H(+). The enzyme catalyses (2R,3R)-tartrate + H(+) = (R)-glycerate + CO2. It carries out the reaction (R)-malate + NAD(+) = pyruvate + CO2 + NADH. In terms of biological role, has multiple catalytic activities. Apart from catalyzing the oxidation of (+)-tartrate to oxaloglycolate, also converts meso-tartrate to D-glycerate and catalyzes the oxidative decarboxylation of D-malate to pyruvate. This is Probable tartrate dehydrogenase/decarboxylase (ycsA) from Bacillus subtilis (strain 168).